A 155-amino-acid polypeptide reads, in one-letter code: Low molecular weight phosphotyrosine protein phosphatase 1 (155 aa).

The Nucleophile role is filled by cysteine 9. Arginine 15 is a catalytic residue. The active-site Proton donor is aspartate 124.

This sequence belongs to the low molecular weight phosphotyrosine protein phosphatase family. In terms of tissue distribution, cone cells and primary pigment cells in developing pupal retina.

It is found in the cytoplasm. The enzyme catalyses O-phospho-L-tyrosyl-[protein] + H2O = L-tyrosyl-[protein] + phosphate. It carries out the reaction a phosphate monoester + H2O = an alcohol + phosphate. Its function is as follows. Acts on tyrosine phosphorylated proteins, low-MW aryl phosphates and natural and synthetic acyl phosphates. This Drosophila melanogaster (Fruit fly) protein is Low molecular weight phosphotyrosine protein phosphatase 1 (primo-1).